A 31-amino-acid polypeptide reads, in one-letter code: Photosystem II reaction center protein T (31 aa).

A helical transmembrane segment spans residues 3–23 (ALVYTFLLVGTLGIIFFAIFF).

It belongs to the PsbT family. PSII is composed of 1 copy each of membrane proteins PsbA, PsbB, PsbC, PsbD, PsbE, PsbF, PsbH, PsbI, PsbJ, PsbK, PsbL, PsbM, PsbT, PsbY, PsbZ, Psb30/Ycf12, at least 3 peripheral proteins of the oxygen-evolving complex and a large number of cofactors. It forms dimeric complexes.

The protein resides in the plastid. Its subcellular location is the chloroplast thylakoid membrane. In terms of biological role, found at the monomer-monomer interface of the photosystem II (PS II) dimer, plays a role in assembly and dimerization of PSII. PSII is a light-driven water plastoquinone oxidoreductase, using light energy to abstract electrons from H(2)O, generating a proton gradient subsequently used for ATP formation. The polypeptide is Photosystem II reaction center protein T (Chlorella vulgaris (Green alga)).